A 211-amino-acid chain; its full sequence is Troponin I, cardiac muscle (211 aa).

Residues 1 to 23 (MADESGDAAGCPPPAPAPIRRQS) form a disordered region. N-acetylalanine is present on A2. A Phosphoserine modification is found at S5. Phosphoserine; by PKA and PKD/PRKD1 is present on residues S23 and S24. Y27 bears the Phosphotyrosine mark. T32 carries the post-translational modification Phosphothreonine; by STK4/MST1. The involved in binding TNC stretch occupies residues 33–80 (EPHAKKKSKISASRKLQLKTLMLQIAKQELEREAEERRGEKGRALSTR). S43 and S45 each carry phosphoserine; by PKC/PRKCE. A Phosphothreonine; by STK4/MST1 modification is found at T52. Position 78 is a phosphoserine (S78). At T79 the chain carries Phosphothreonine. Phosphothreonine; by STK4/MST1 occurs at positions 130 and 144. Residues 130-150 (TQKIFDLRGKFKRPTLRRVRI) form an involved in binding TNC and actin region. Position 151 is a phosphoserine; by PAK3 (S151). A Phosphoserine modification is found at S167. Residue T182 is modified to Phosphothreonine. The residue at position 200 (S200) is a Phosphoserine.

This sequence belongs to the troponin I family. Binds to actin and tropomyosin. Interacts with TRIM63. Interacts with STK4/MST1. Phosphorylated at Ser-23 and Ser-24 by PRKD1; phosphorylation reduces myofilament calcium sensitivity. Phosphorylated preferentially at Thr-32. Phosphorylation by STK4/MST1 alters its binding affinity to TNNC1 (cardiac Tn-C) and TNNT2 (cardiac Tn-T). Phosphorylated at Ser-43 and Ser-45 by PRKCE; phosphorylation increases myocardium contractile dysfunction.

Its function is as follows. Troponin I is the inhibitory subunit of troponin, the thin filament regulatory complex which confers calcium-sensitivity to striated muscle actomyosin ATPase activity. The polypeptide is Troponin I, cardiac muscle (TNNI3) (Canis lupus familiaris (Dog)).